The chain runs to 339 residues: Methionine import ATP-binding protein MetN 2 (339 aa).

The ABC transporter domain occupies 2–241 (ISFNNVSKLY…PKTKTTQNFV (240 aa)). ATP is bound at residue 38 to 45 (GFSGAGKS).

It belongs to the ABC transporter superfamily. Methionine importer (TC 3.A.1.24) family. As to quaternary structure, the complex is composed of two ATP-binding proteins (MetN), two transmembrane proteins (MetI) and a solute-binding protein (MetQ).

Its subcellular location is the cell membrane. The enzyme catalyses L-methionine(out) + ATP + H2O = L-methionine(in) + ADP + phosphate + H(+). The catalysed reaction is D-methionine(out) + ATP + H2O = D-methionine(in) + ADP + phosphate + H(+). Functionally, part of the ABC transporter complex MetNIQ involved in methionine import. Responsible for energy coupling to the transport system. The sequence is that of Methionine import ATP-binding protein MetN 2 from Bacillus cereus (strain ATCC 14579 / DSM 31 / CCUG 7414 / JCM 2152 / NBRC 15305 / NCIMB 9373 / NCTC 2599 / NRRL B-3711).